The primary structure comprises 909 residues: E3 ubiquitin-protein ligase HACE1 (909 aa).

An N-terminal helix important for homodimerization region spans residues M1–V21. 7 ANK repeats span residues L23–F55, V64–Y93, S97–I126, E130–V159, M163–R192, S196–D226, and N228–P253. The disordered stretch occupies residues Q398–G433. Positions N574 to A909 constitute an HECT domain. Catalysis depends on C876, which acts as the Glycyl thioester intermediate.

As to quaternary structure, homodimer. The homodimer is autoinhibited and stabilized by its N-terminal helix. Interacts with RAB1 (RAB1A, RAB1B or RAB1C), RAB4 (RAB4A or RAB4B) and RAB11 (RAB11A or RAB11B); in a GTP-dependent manner. Interacts with the 26S proteasomal complex through the 20S core proteasomal subunit. Interacts with RARB. In terms of processing, autoubiquitinated.

It localises to the golgi apparatus. It is found in the golgi stack membrane. Its subcellular location is the cytoplasm. The protein resides in the endoplasmic reticulum. The enzyme catalyses S-ubiquitinyl-[E2 ubiquitin-conjugating enzyme]-L-cysteine + [acceptor protein]-L-lysine = [E2 ubiquitin-conjugating enzyme]-L-cysteine + N(6)-ubiquitinyl-[acceptor protein]-L-lysine.. It functions in the pathway protein modification; protein ubiquitination. Sterically autoinhibited in its dimeric state. In terms of biological role, E3 ubiquitin-protein ligase involved in Golgi membrane fusion and regulation of small GTPases. Acts as a regulator of Golgi membrane dynamics during the cell cycle: recruited to Golgi membrane by Rab proteins and regulates postmitotic Golgi membrane fusion. Acts by mediating ubiquitination during mitotic Golgi disassembly, ubiquitination serving as a signal for Golgi reassembly later, after cell division. Specifically binds GTP-bound RAC1, mediating ubiquitination and subsequent degradation of active RAC1, thereby playing a role in host defense against pathogens. May also act as a transcription regulator via its interaction with RARB. In Mus musculus (Mouse), this protein is E3 ubiquitin-protein ligase HACE1 (Hace1).